Here is a 246-residue protein sequence, read N- to C-terminus: Enolase-phosphatase E1 (246 aa).

Mg(2+)-binding residues include Asp-11 and Glu-13. Substrate is bound by residues 140 to 141 and Lys-174; that span reads SS. Asp-199 contacts Mg(2+).

This sequence belongs to the HAD-like hydrolase superfamily. MasA/MtnC family. Monomer. Mg(2+) serves as cofactor.

The protein localises to the cytoplasm. The protein resides in the nucleus. It carries out the reaction 5-methylsulfanyl-2,3-dioxopentyl phosphate + H2O = 1,2-dihydroxy-5-(methylsulfanyl)pent-1-en-3-one + phosphate. It functions in the pathway amino-acid biosynthesis; L-methionine biosynthesis via salvage pathway; L-methionine from S-methyl-5-thio-alpha-D-ribose 1-phosphate: step 3/6. It participates in amino-acid biosynthesis; L-methionine biosynthesis via salvage pathway; L-methionine from S-methyl-5-thio-alpha-D-ribose 1-phosphate: step 4/6. Functionally, bifunctional enzyme that catalyzes the enolization of 2,3-diketo-5-methylthiopentyl-1-phosphate (DK-MTP-1-P) into the intermediate 2-hydroxy-3-keto-5-methylthiopentenyl-1-phosphate (HK-MTPenyl-1-P), which is then dephosphorylated to form the acireductone 1,2-dihydroxy-3-keto-5-methylthiopentene (DHK-MTPene). This is Enolase-phosphatase E1 from Acyrthosiphon pisum (Pea aphid).